The following is a 153-amino-acid chain: ORM1-like protein 1 (153 aa).

Residues methionine 1–tyrosine 26 are Cytoplasmic-facing. 2 helical membrane-spanning segments follow: residues alanine 27–proline 46 and valine 47–valine 67. The Cytoplasmic portion of the chain corresponds to lysine 68–lysine 100. The chain crosses the membrane as a helical span at residues phenylalanine 101–proline 121. Residues threonine 122–histidine 123 are Extracellular-facing. Residues phenylalanine 124–glycine 144 traverse the membrane as a helical segment. At valine 145 to tyrosine 153 the chain is on the cytoplasmic side.

Belongs to the ORM family. Ceramide-sensitive subunit of the serine palmitoyltransferase (SPT) complex, which is also composed of SPTLC1, SPTLC2/3 and SPTSSA/B.

The protein localises to the endoplasmic reticulum membrane. In terms of biological role, plays an essential role in the homeostatic regulation of sphingolipid de novo biosynthesis by modulating the activity of the serine palmitoyltransferase (SPT) in response to ceramide levels. When complexed to SPT, the binding of ceramides to its N-terminus stabilizes a conformation that block SPT substrate entry, hence preventing SPT catalytic activity. Through this mechanism, maintains ceramide levels at sufficient concentrations for the production of complex sphingolipids, but which prevents the accumulation of ceramides to levels that trigger apoptosis. The sequence is that of ORM1-like protein 1 (ormdl1) from Xenopus laevis (African clawed frog).